The primary structure comprises 356 residues: Tricetin 3',4',5'-O-trimethyltransferase (356 aa).

123–129 (MNQDKVL) is a substrate binding site. Residues 155–173 (AFEYHGTDPRFNRVFNEGM) form a substrate binding region. G201, D224, D244, M245, and K258 together coordinate S-adenosyl-L-methionine. Catalysis depends on H262, which acts as the Proton acceptor.

The protein belongs to the class I-like SAM-binding methyltransferase superfamily. Cation-independent O-methyltransferase family. COMT subfamily. As to quaternary structure, homodimer. The monomer is fully active and dimerization is not required for sequential methylation. Expressed in roots, stems and leaves.

It carries out the reaction tricetin + 3 S-adenosyl-L-methionine = 3',4',5'-O-trimethyltricetin + 3 S-adenosyl-L-homocysteine + 3 H(+). Its function is as follows. Flavonoid B-ring-specific O-methyltransferase with a preference for flavones &gt; dihydroflavones &gt; flavonols that possess at least two B-ring hydroxyl groups. Active with tricetin, 5-hydroxyferulic acid, luteolin, quercitin, eriodictyol, quercetagetin, taxifolin, gossypetin and myricetin. No activity with naringenin, apigenin, kaempferol, 7,8-dihydroxy- or 5,7,8-trihydroxy flavones, chlorogenic acid, gallic acid or daphnetin. Catalyzes the sequential O-methylation of tricetin via 3'-O-methyltricetin, 3',5'-O-methyltricetin to 3',4',5'-O-trimethyltricetin. May also be involved in S lignin biosynthesis. The sequence is that of Tricetin 3',4',5'-O-trimethyltransferase (OMT2) from Triticum aestivum (Wheat).